Reading from the N-terminus, the 140-residue chain is Putative nickel-responsive regulator (140 aa).

H81, H92, H94, and C100 together coordinate Ni(2+).

The protein belongs to the transcriptional regulatory CopG/NikR family. Requires Ni(2+) as cofactor.

Transcriptional regulator. This chain is Putative nickel-responsive regulator, found in Methanococcoides burtonii (strain DSM 6242 / NBRC 107633 / OCM 468 / ACE-M).